The chain runs to 121 residues: uncharacterized protein (121 aa).

2 helical membrane-spanning segments follow: residues 16–36 (GFMV…GFAV) and 74–94 (LYIA…MKTI).

It localises to the cell membrane. This is an uncharacterized protein from Bacillus subtilis (strain 168).